We begin with the raw amino-acid sequence, 438 residues long: tRNA-2-methylthio-N(6)-dimethylallyladenosine synthase (438 aa).

Residues 3–123 enclose the MTTase N-terminal domain; it reads KRLFVKTYGC…LPEMVAQAAR (121 aa). [4Fe-4S] cluster-binding residues include Cys12, Cys48, Cys86, Cys160, Cys164, and Cys167. A Radical SAM core domain is found at 146–374; the sequence is HAEGTSAFLS…QALLLDQTMR (229 aa). The region spanning 377-438 is the TRAM domain; sequence HACVGREMRI…HPNSLEAVPA (62 aa).

This sequence belongs to the methylthiotransferase family. MiaB subfamily. As to quaternary structure, monomer. The cofactor is [4Fe-4S] cluster.

Its subcellular location is the cytoplasm. It catalyses the reaction N(6)-dimethylallyladenosine(37) in tRNA + (sulfur carrier)-SH + AH2 + 2 S-adenosyl-L-methionine = 2-methylsulfanyl-N(6)-dimethylallyladenosine(37) in tRNA + (sulfur carrier)-H + 5'-deoxyadenosine + L-methionine + A + S-adenosyl-L-homocysteine + 2 H(+). Its function is as follows. Catalyzes the methylthiolation of N6-(dimethylallyl)adenosine (i(6)A), leading to the formation of 2-methylthio-N6-(dimethylallyl)adenosine (ms(2)i(6)A) at position 37 in tRNAs that read codons beginning with uridine. The protein is tRNA-2-methylthio-N(6)-dimethylallyladenosine synthase of Paramagnetospirillum magneticum (strain ATCC 700264 / AMB-1) (Magnetospirillum magneticum).